A 1044-amino-acid chain; its full sequence is Diacylglycerol lipase-alpha (1044 aa).

Residues 1–22 (MPGIVVFRRRWSVGSDDLVLPA) lie on the Cytoplasmic side of the membrane. Residues 23–43 (IFLFLLHTTWFVILSVVLFGL) form a helical membrane-spanning segment. The Extracellular portion of the chain corresponds to 44-60 (VYNPHEACSLNLVDHGR). The helical transmembrane segment at 61-81 (GYLGILLSCMIAEMAIIWLSM) threads the bilayer. The Cytoplasmic portion of the chain corresponds to 82–101 (RGGILYTEPRDSMQYVLYVR). A helical membrane pass occupies residues 102–122 (LAILVIEFIYAIVGIVWLTQY). The Extracellular segment spans residues 123–136 (YTSCNDLTAKNVTL). Asparagine 133 carries N-linked (GlcNAc...) asparagine glycosylation. A helical transmembrane segment spans residues 137-157 (GMVVCNWVVILSVCITVLCVF). Over 158 to 1044 (DPTGRTFVKL…KQDDLVISAR (887 aa)) the chain is Cytoplasmic. Residues serine 472 and aspartate 524 each act as charge relay system in the active site. Phosphoserine occurs at positions 728, 730, 733, 744, 784, 786, 808, 810, 835, 849, and 954. Residues 848–897 (LSKHSQDTQPLEAALGSGGVTPERPPSATIEEEEAAGGSEGGGVAPRGEL) are disordered. Residues 1013-1044 (QECLATDKIRTSTPTGHGASPTKQDDLVISAR) are disordered. The residue at position 1025 (threonine 1025) is a Phosphothreonine.

The protein belongs to the AB hydrolase superfamily. Lipase family. As to quaternary structure, interacts (via C-terminal) with CAMK2A; leading to the phosphorylation and inhibition of DAGLA enzymatic activity. Interacts (via PPXXF motif) with HOMER1 and HOMER2; this interaction is required for DAGLA membrane localization. Ca(2+) is required as a cofactor. Post-translationally, phosphorylated at Ser-784 and Ser-810 by CAMK2A; phosphorylation by CAMK2A inhibits diacylglycerol lipase activity. Highly expressed by principal cells in the hippocampus. In embryonic brains, it is present in axonal tracts, while in adults it localizes to dendritic fields, correlating with the developmental change in requirement for 2-AG synthesis from the pre- to the postsynaptic compartment. Concentrated in heads of dendritic spines throughout the hippocampal formation. Highly compartmentalized into a wide perisynaptic annulus around the postsynaptic density of axospinous contacts but not intrasynaptically (at protein level).

The protein localises to the cell membrane. It localises to the cell projection. It is found in the dendritic spine membrane. Its subcellular location is the postsynaptic density membrane. The protein resides in the early endosome membrane. It carries out the reaction a 1,2-diacyl-sn-glycerol + H2O = a 2-acylglycerol + a fatty acid + H(+). The enzyme catalyses 1-octadecanoyl-2-(5Z,8Z,11Z,14Z-eicosatetraenoyl)-sn-glycerol + H2O = 2-(5Z,8Z,11Z,14Z-eicosatetraenoyl)-glycerol + octadecanoate + H(+). The catalysed reaction is 1,2-di-(9Z-octadecenoyl)-sn-glycerol + H2O = 2-(9Z-octadecenoyl)-glycerol + (9Z)-octadecenoate + H(+). It catalyses the reaction 1-(9Z-octadecenoyl)-2-(5Z,8Z,11Z,14Z-eicosatetraenoyl)-sn-glycerol + H2O = 2-(5Z,8Z,11Z,14Z-eicosatetraenoyl)-glycerol + (9Z)-octadecenoate + H(+). It carries out the reaction 1-(9Z-octadecenoyl)-2-octadecanoyl-sn-glycerol + H2O = 2-octadecanoylglycerol + (9Z)-octadecenoate + H(+). The enzyme catalyses 1-(9Z-octadecenoyl)-2-(9Z,12Z-octadecadienoyl)-sn-glycerol + H2O = 2-(9Z,12Z-octadecadienoyl)-glycerol + (9Z)-octadecenoate + H(+). The catalysed reaction is 1-(9Z-octadecenoyl)-2-O-(5Z,8Z,11Z,14Z-eicosatetraenyl)-sn-glycerol + H2O = 2-O-(5Z,8Z,11Z,14Z)-eicosatetraenylglycerol + (9Z)-octadecenoate + H(+). Inhibited by 1,2,3-triazole urea covalent inhibitor KT172, DH376 and DO34. Inhibited by p-hydroxy-mercuri-benzoate and HgCl(2), but not to PMSF. Also inhibited by RHC80267. Diacylglycerol lipase activity is inhibited by the phosphorylation of Ser-784 and Ser-810 by CAMK2A. Its function is as follows. Serine hydrolase that hydrolyzes arachidonic acid-esterified diacylglycerols (DAGs) to produce the principal endocannabinoid (eCB), 2-arachidonoylglycerol (2-AG). Preferentially hydrolyzes sn-1 fatty acids from diacylglycerols (DAG) that contain arachidonic acid (AA) esterified at the sn-2 position to biosynthesize 2-AG. Has negligible activity against other lipids including monoacylglycerols and phospholipids. Plays a key role in regulating 2-AG signaling in the central nervous system (CNS). Controls the activity of 2-AG as a retrograde messenger at neuronal synapses. Supports axonal growth during development and adult neurogenesis. Plays a role for eCB signaling in the physiological regulation of anxiety and depressive behaviors. Also regulates neuroinflammatory responses in the brain, in particular, LPS-induced microglial activation. The chain is Diacylglycerol lipase-alpha (Dagla) from Mus musculus (Mouse).